The sequence spans 638 residues: Phosphomethylpyrimidine synthase (638 aa).

Residues Asn-243, Met-272, Tyr-301, His-337, 357–359, 398–401, and Glu-437 each bind substrate; these read SRG and DGLR. A Zn(2+)-binding site is contributed by His-441. Tyr-464 provides a ligand contact to substrate. His-505 contributes to the Zn(2+) binding site. 3 residues coordinate [4Fe-4S] cluster: Cys-585, Cys-588, and Cys-593.

This sequence belongs to the ThiC family. In terms of assembly, homodimer. [4Fe-4S] cluster is required as a cofactor.

The enzyme catalyses 5-amino-1-(5-phospho-beta-D-ribosyl)imidazole + S-adenosyl-L-methionine = 4-amino-2-methyl-5-(phosphooxymethyl)pyrimidine + CO + 5'-deoxyadenosine + formate + L-methionine + 3 H(+). It participates in cofactor biosynthesis; thiamine diphosphate biosynthesis. Catalyzes the synthesis of the hydroxymethylpyrimidine phosphate (HMP-P) moiety of thiamine from aminoimidazole ribotide (AIR) in a radical S-adenosyl-L-methionine (SAM)-dependent reaction. This is Phosphomethylpyrimidine synthase from Aromatoleum aromaticum (strain DSM 19018 / LMG 30748 / EbN1) (Azoarcus sp. (strain EbN1)).